A 736-amino-acid polypeptide reads, in one-letter code: Elongation factor 2 (736 aa).

Residues 18–262 (TRVRNIGIIA…AVIKFVPNPV (245 aa)) enclose the tr-type G domain. Residues 27–34 (AHVDHGKT), 93–97 (DTPGH), and 147–150 (NKVD) contribute to the GTP site. Histidine 603 is modified (diphthamide).

The protein belongs to the TRAFAC class translation factor GTPase superfamily. Classic translation factor GTPase family. EF-G/EF-2 subfamily.

The protein localises to the cytoplasm. In terms of biological role, catalyzes the GTP-dependent ribosomal translocation step during translation elongation. During this step, the ribosome changes from the pre-translocational (PRE) to the post-translocational (POST) state as the newly formed A-site-bound peptidyl-tRNA and P-site-bound deacylated tRNA move to the P and E sites, respectively. Catalyzes the coordinated movement of the two tRNA molecules, the mRNA and conformational changes in the ribosome. The polypeptide is Elongation factor 2 (Metallosphaera sedula (strain ATCC 51363 / DSM 5348 / JCM 9185 / NBRC 15509 / TH2)).